A 398-amino-acid polypeptide reads, in one-letter code: MGNNVAETQIKPFTMNFGPQHPAAHGVLRLVLEMDGEVVQRADPHVGLLHRGTEKLIEYKTYIQALPYFDRLDYVSPMSQEHAFALATEKLLGITVPVRGQYIRVLFSEITRILNHLLNITTFGLDVGAITPSLWGFEEREKLMAFYERVSGARMHANYFRPGGVNLDMPAGLADDIWEYTERFPKFVADLNNLLTENRIFKQRTVDIGVVSRADALAWGFSGPMIRGSGVPWDLRKAQPYDRYDEFDFDIPVGSTGDCYARYLVRMEEMRQSNRLIRQALEKLAKTPGPVKVNDRKIAPPPRGEMKRSMESLIHHFKLYTEGYHVPAGETYTAVESPKGEFGVYLVSDGTNRPYRCKIRPTGFSHLQAMDFMSKGHMLADTVAIIGSMDIVFGEIDR.

This sequence belongs to the complex I 49 kDa subunit family. As to quaternary structure, NDH-1 is composed of 14 different subunits. Subunits NuoB, C, D, E, F, and G constitute the peripheral sector of the complex.

Its subcellular location is the cell inner membrane. It carries out the reaction a quinone + NADH + 5 H(+)(in) = a quinol + NAD(+) + 4 H(+)(out). Functionally, NDH-1 shuttles electrons from NADH, via FMN and iron-sulfur (Fe-S) centers, to quinones in the respiratory chain. The immediate electron acceptor for the enzyme in this species is believed to be ubiquinone. Couples the redox reaction to proton translocation (for every two electrons transferred, four hydrogen ions are translocated across the cytoplasmic membrane), and thus conserves the redox energy in a proton gradient. The sequence is that of NADH-quinone oxidoreductase subunit D from Rhodospirillum centenum (strain ATCC 51521 / SW).